The chain runs to 137 residues: Ribosome-binding factor A (137 aa).

Belongs to the RbfA family. As to quaternary structure, monomer. Binds 30S ribosomal subunits, but not 50S ribosomal subunits or 70S ribosomes.

Its subcellular location is the cytoplasm. Its function is as follows. One of several proteins that assist in the late maturation steps of the functional core of the 30S ribosomal subunit. Associates with free 30S ribosomal subunits (but not with 30S subunits that are part of 70S ribosomes or polysomes). Required for efficient processing of 16S rRNA. May interact with the 5'-terminal helix region of 16S rRNA. The polypeptide is Ribosome-binding factor A (Nitrobacter hamburgensis (strain DSM 10229 / NCIMB 13809 / X14)).